The following is a 258-amino-acid chain: UPF0758 protein Bamb_2548 (258 aa).

A disordered region spans residues 1–43; the sequence is MLSPCLAAPATECRDPADAPAAPARHTGPARPRKRRPRNWKPH. The segment covering 31-43 has biased composition (basic residues); it reads RPRKRRPRNWKPH. The MPN domain maps to 136–258; the sequence is QIDSPGAVED…TFSFARAGWL (123 aa). Residues His207, His209, and Asp220 each coordinate Zn(2+). Positions 207–220 match the JAMM motif motif; it reads HNHPSGAVQPSAED.

Belongs to the UPF0758 family.

This chain is UPF0758 protein Bamb_2548, found in Burkholderia ambifaria (strain ATCC BAA-244 / DSM 16087 / CCUG 44356 / LMG 19182 / AMMD) (Burkholderia cepacia (strain AMMD)).